Reading from the N-terminus, the 365-residue chain is 4-hydroxy-3-methylbut-2-en-1-yl diphosphate synthase (flavodoxin) (365 aa).

Residues C265, C268, C300, and E307 each coordinate [4Fe-4S] cluster.

This sequence belongs to the IspG family. It depends on [4Fe-4S] cluster as a cofactor.

It carries out the reaction (2E)-4-hydroxy-3-methylbut-2-enyl diphosphate + oxidized [flavodoxin] + H2O + 2 H(+) = 2-C-methyl-D-erythritol 2,4-cyclic diphosphate + reduced [flavodoxin]. Its pathway is isoprenoid biosynthesis; isopentenyl diphosphate biosynthesis via DXP pathway; isopentenyl diphosphate from 1-deoxy-D-xylulose 5-phosphate: step 5/6. Its function is as follows. Converts 2C-methyl-D-erythritol 2,4-cyclodiphosphate (ME-2,4cPP) into 1-hydroxy-2-methyl-2-(E)-butenyl 4-diphosphate. The sequence is that of 4-hydroxy-3-methylbut-2-en-1-yl diphosphate synthase (flavodoxin) from Bacillus mycoides (strain KBAB4) (Bacillus weihenstephanensis).